Reading from the N-terminus, the 560-residue chain is Nucleoprotein (560 aa).

Positions 53–236 are binding site for the cap structure m7GTP; sequence MRKDKRTDTD…ITQEQSQINV (184 aa). Positions 333–353 are disordered; that stretch reads LTDTGSPNHPPVRNGGSPRLS. 2 residues coordinate Mn(2+): aspartate 379 and glutamate 381. Glutamate 389, cysteine 496, histidine 499, and cysteine 520 together coordinate Zn(2+). Position 524 (aspartate 524) interacts with Mn(2+).

This sequence belongs to the arenaviridae nucleocapsid protein family. Homomultimerizes to form the nucleocapsid. Binds to viral genomic RNA. Interacts with glycoprotein G2. Interacts with protein Z; this interaction probably directs the encapsidated genome to budding sites. Interacts with protein L; this interaction does not interfere with Z-L interaction. Interacts with host IKBKE (via Protein kinase domain); the interaction inhibits IKBKE kinase activity.

The protein localises to the virion. Its subcellular location is the host cytoplasm. Encapsidates the genome, protecting it from nucleases. The encapsidated genomic RNA is termed the nucleocapsid (NC). Serves as template for viral transcription and replication. The increased presence of protein N in host cell does not seem to trigger the switch from transcription to replication as observed in other negative strain RNA viruses. Through the interaction with host IKBKE, strongly inhibits the phosphorylation and nuclear translocation of host IRF3, a protein involved in interferon activation pathway, leading to the inhibition of interferon-beta and IRF3-dependent promoters activation. Also encodes a functional 3'-5' exoribonuclease that degrades preferentially dsRNA substrates and thereby participates in the suppression of interferon induction. This chain is Nucleoprotein, found in Pirital mammarenavirus (isolate Rat/Venezuela/VAV-488/1995) (PIRV).